A 542-amino-acid chain; its full sequence is ATP synthase subunit alpha (542 aa).

176–183 (GDRQTGKT) contributes to the ATP binding site.

This sequence belongs to the ATPase alpha/beta chains family. In terms of assembly, F-type ATPases have 2 components, CF(1) - the catalytic core - and CF(0) - the membrane proton channel. CF(1) has five subunits: alpha(3), beta(3), gamma(1), delta(1), epsilon(1). CF(0) has three main subunits: a(1), b(2) and c(9-12). The alpha and beta chains form an alternating ring which encloses part of the gamma chain. CF(1) is attached to CF(0) by a central stalk formed by the gamma and epsilon chains, while a peripheral stalk is formed by the delta and b chains.

Its subcellular location is the cell membrane. The catalysed reaction is ATP + H2O + 4 H(+)(in) = ADP + phosphate + 5 H(+)(out). In terms of biological role, produces ATP from ADP in the presence of a proton gradient across the membrane. The alpha chain is a regulatory subunit. The sequence is that of ATP synthase subunit alpha from Tropheryma whipplei (strain TW08/27) (Whipple's bacillus).